The following is a 1019-amino-acid chain: Katanin p80 WD40 repeat-containing subunit B1 homolog KTN80.1 (1019 aa).

7 WD repeats span residues 13–53 (AHSG…SPMS), 56–95 (GHTS…MVRA), 98–137 (GHRS…CIQT), 140–181 (GHTR…HEFK), 183–221 (HEGP…LIGT), 224–264 (PEAT…DGVD), and 266–303 (GWST…LEPY). The short motif at 114–130 (FLASGSSDTNLRVWDTR) is the DWD box element. Disordered regions lie at residues 388 to 424 (FGPA…TKSG), 455 to 474 (KSGL…LSEQ), 517 to 581 (IHRS…GSRE), and 607 to 652 (RGEK…RARS). A compositionally biased stretch (polar residues) spans 465–474 (QTQNAFLSEQ). The segment covering 553-572 (IPSKTERVLSREKPGDEQKN) has biased composition (basic and acidic residues). The span at 614 to 628 (TEGASTTIEQNNNAV) shows a compositional bias: polar residues.

The protein belongs to the WD repeat KATNB1 family. Component of KTN80-KTN1 complexes composed of a hexamer of KTN1-KTN80 heterodimers that sense microtubule (MT) geometry to confer precise MT severing. Interacts directly with AAA1/KTN1 and KTN80.3, and weakly with KTN80.4. Expressed at low levels in siliques, flowers, leaves, stems and roots.

Its subcellular location is the cytoplasm. The protein localises to the cytoskeleton. Functionally, may participate in a complex which severs microtubules in an ATP-dependent manner. Microtubule severing may promote rapid reorganization of cellular microtubule arrays. Confers precision to microtubule (MT) severing by specific targeting of KTN1 to MT cleavage sites such as crossover or branching nucleation sites. Together with other KTN80s, regulates cell elongation by modulating MT organization. This chain is Katanin p80 WD40 repeat-containing subunit B1 homolog KTN80.1, found in Arabidopsis thaliana (Mouse-ear cress).